We begin with the raw amino-acid sequence, 431 residues long: Protein translocase subunit SecY 1 (431 aa).

10 consecutive transmembrane segments (helical) span residues isoleucine 18–glycine 38, tyrosine 67–leucine 87, tyrosine 115–leucine 135, valine 150–isoleucine 170, glycine 178–isoleucine 198, isoleucine 215–valine 235, valine 268–phenylalanine 288, glycine 312–valine 332, leucine 365–leucine 385, and leucine 392–glutamate 412.

The protein belongs to the SecY/SEC61-alpha family. Component of the Sec protein translocase complex. Heterotrimer consisting of SecY, SecE and SecG subunits. The heterotrimers can form oligomers, although 1 heterotrimer is thought to be able to translocate proteins. Interacts with the ribosome. Interacts with SecDF, and other proteins may be involved. Interacts with SecA.

Its subcellular location is the cell membrane. In terms of biological role, the central subunit of the protein translocation channel SecYEG. Consists of two halves formed by TMs 1-5 and 6-10. These two domains form a lateral gate at the front which open onto the bilayer between TMs 2 and 7, and are clamped together by SecE at the back. The channel is closed by both a pore ring composed of hydrophobic SecY resides and a short helix (helix 2A) on the extracellular side of the membrane which forms a plug. The plug probably moves laterally to allow the channel to open. The ring and the pore may move independently. This Lactobacillus kefiranofaciens subsp. kefiranofaciens protein is Protein translocase subunit SecY 1.